A 119-amino-acid polypeptide reads, in one-letter code: U-scoloptoxin(01)-Er1a (119 aa).

The signal sequence occupies residues 1-22 (MEIHSNIILLLLIALFAIFVKM). Residues 39–97 (NFACSGKKPGFYADEGFDCQVYHMCSPEGQLTTYLCGPGTIFNQKKLVCDLPTNYNCAD) enclose the Chitin-binding type-2 domain. A disulfide bridge links cysteine 74 with cysteine 87.

Belongs to the scoloptoxin-01 family. Contains 3 disulfide bonds. Expressed by the venom gland.

Its subcellular location is the secreted. The sequence is that of U-scoloptoxin(01)-Er1a from Ethmostigmus rubripes (Giant centipede).